We begin with the raw amino-acid sequence, 399 residues long: Argininosuccinate synthase (399 aa).

8 to 16 contributes to the ATP binding site; it reads AYSGGLDTS. 2 residues coordinate L-citrulline: Tyr-87 and Ser-92. Gly-117 serves as a coordination point for ATP. Positions 119, 123, and 124 each coordinate L-aspartate. L-citrulline is bound at residue Asn-123. 5 residues coordinate L-citrulline: Arg-127, Ser-176, Ser-185, Glu-261, and Tyr-273.

The protein belongs to the argininosuccinate synthase family. Type 1 subfamily. Homotetramer.

It localises to the cytoplasm. It catalyses the reaction L-citrulline + L-aspartate + ATP = 2-(N(omega)-L-arginino)succinate + AMP + diphosphate + H(+). Its pathway is amino-acid biosynthesis; L-arginine biosynthesis; L-arginine from L-ornithine and carbamoyl phosphate: step 2/3. The sequence is that of Argininosuccinate synthase from Clostridioides difficile (strain 630) (Peptoclostridium difficile).